The primary structure comprises 412 residues: MLSLKAQSSVVGKSSSLRLVRNFSKNVRALSQVADETKPGDDDLVQIDLPETSFEGYLLDVPELSYQTTKSNLLQMYKDMIIVRRMEMACDALYKAKKIRGFCHSSVGQEAIAVGIENAITKRDTVITSYRCHGFTYMRGAAVQAVLAELMGRRTGVSFGKGGSMHLYAPGFYGGNGIVGAQVPLGAGLAFAHQYKHEDACSFALYGDGASNQGQVFESFNMAKLWNLPAVFCCENNKYGMGTAAARSSAMTEYFKRGQYIPGLKVNGMDILAVYQASKFAKDWTVSGNGPIVLEYETYRYGGHSMSDPGTTYRTRDEIQHMRSKNDPIAGLKMHLLELGIATEDEIKAYDKAARKYVDEQVELADAAPAPEAKMSILFEDVYVPGSETPTLRGRLQEDTWDFAKKSFAFRD.

Positions 104, 130, 131, 169, 177, 179, 208, 209, 210, 237, and 239 each coordinate pyruvate. The thiamine diphosphate site is built by tyrosine 130 and arginine 131. Residues glycine 177, valine 179, aspartate 208, glycine 209, alanine 210, and asparagine 237 each contribute to the thiamine diphosphate site. Aspartate 208 contributes to the Mg(2+) binding site. Positions 237 and 239 each coordinate Mg(2+). Histidine 304 contributes to the thiamine diphosphate binding site.

As to quaternary structure, tetramer of 2 alpha and 2 beta subunits. Thiamine diphosphate serves as cofactor. The cofactor is Mg(2+).

Its subcellular location is the mitochondrion matrix. The enzyme catalyses N(6)-[(R)-lipoyl]-L-lysyl-[protein] + pyruvate + H(+) = N(6)-[(R)-S(8)-acetyldihydrolipoyl]-L-lysyl-[protein] + CO2. Its activity is regulated as follows. E1 activity is regulated by phosphorylation (inactivation) and dephosphorylation (activation) of the alpha subunit. The pyruvate dehydrogenase complex catalyzes the overall conversion of pyruvate to acetyl-CoA and CO(2). It contains multiple copies of three enzymatic components: pyruvate dehydrogenase (E1), dihydrolipoamide acetyltransferase (E2) and lipoamide dehydrogenase (E3). The chain is Pyruvate dehydrogenase E1 component subunit alpha, mitochondrial (PDA1) from Kluyveromyces lactis (strain ATCC 8585 / CBS 2359 / DSM 70799 / NBRC 1267 / NRRL Y-1140 / WM37) (Yeast).